A 336-amino-acid chain; its full sequence is Dihydroorotate dehydrogenase (quinone) (336 aa).

FMN is bound by residues 62-66 (AGLDK) and T86. K66 serves as a coordination point for substrate. 111 to 115 (NRMGF) provides a ligand contact to substrate. N139 and N172 together coordinate FMN. N172 serves as a coordination point for substrate. The active-site Nucleophile is S175. Substrate is bound at residue N177. FMN is bound by residues K217 and T245. 246–247 (NT) provides a ligand contact to substrate. FMN contacts are provided by residues G268, G297, and 318–319 (YS).

Belongs to the dihydroorotate dehydrogenase family. Type 2 subfamily. Monomer. The cofactor is FMN.

The protein localises to the cell membrane. The catalysed reaction is (S)-dihydroorotate + a quinone = orotate + a quinol. The protein operates within pyrimidine metabolism; UMP biosynthesis via de novo pathway; orotate from (S)-dihydroorotate (quinone route): step 1/1. Its function is as follows. Catalyzes the conversion of dihydroorotate to orotate with quinone as electron acceptor. The chain is Dihydroorotate dehydrogenase (quinone) from Salmonella typhi.